Consider the following 207-residue polypeptide: Large ribosomal subunit protein bL25 (207 aa).

Belongs to the bacterial ribosomal protein bL25 family. CTC subfamily. Part of the 50S ribosomal subunit; part of the 5S rRNA/L5/L18/L25 subcomplex. Contacts the 5S rRNA. Binds to the 5S rRNA independently of L5 and L18.

In terms of biological role, this is one of the proteins that binds to the 5S RNA in the ribosome where it forms part of the central protuberance. The sequence is that of Large ribosomal subunit protein bL25 from Paraburkholderia xenovorans (strain LB400).